Here is a 106-residue protein sequence, read N- to C-terminus: UPF0145 protein (106 aa).

This sequence belongs to the UPF0145 family.

In Listeria grayi (Listeria murrayi), this protein is UPF0145 protein.